Here is a 545-residue protein sequence, read N- to C-terminus: Membrane protein insertase YidC (545 aa).

4 helical membrane passes run 350–370 (IIGN…AVLY), 424–444 (LPML…FASV), 461–481 (ADPY…QTYL), and 498–518 (PLVF…YWVV).

This sequence belongs to the OXA1/ALB3/YidC family. Type 1 subfamily. Interacts with the Sec translocase complex via SecD. Specifically interacts with transmembrane segments of nascent integral membrane proteins during membrane integration.

Its subcellular location is the cell inner membrane. In terms of biological role, required for the insertion and/or proper folding and/or complex formation of integral membrane proteins into the membrane. Involved in integration of membrane proteins that insert both dependently and independently of the Sec translocase complex, as well as at least some lipoproteins. Aids folding of multispanning membrane proteins. This is Membrane protein insertase YidC from Neisseria meningitidis serogroup C (strain 053442).